A 447-amino-acid polypeptide reads, in one-letter code: UDP-N-acetylmuramoylalanine--D-glutamate ligase (447 aa).

112–118 (GTNGKST) contacts ATP.

The protein belongs to the MurCDEF family.

Its subcellular location is the cytoplasm. It catalyses the reaction UDP-N-acetyl-alpha-D-muramoyl-L-alanine + D-glutamate + ATP = UDP-N-acetyl-alpha-D-muramoyl-L-alanyl-D-glutamate + ADP + phosphate + H(+). It participates in cell wall biogenesis; peptidoglycan biosynthesis. Functionally, cell wall formation. Catalyzes the addition of glutamate to the nucleotide precursor UDP-N-acetylmuramoyl-L-alanine (UMA). In Legionella pneumophila subsp. pneumophila (strain Philadelphia 1 / ATCC 33152 / DSM 7513), this protein is UDP-N-acetylmuramoylalanine--D-glutamate ligase.